A 498-amino-acid chain; its full sequence is Galactose-1-phosphate uridylyltransferase (498 aa).

This sequence belongs to the galactose-1-phosphate uridylyltransferase type 2 family.

The protein localises to the cytoplasm. The enzyme catalyses alpha-D-galactose 1-phosphate + UDP-alpha-D-glucose = alpha-D-glucose 1-phosphate + UDP-alpha-D-galactose. It functions in the pathway carbohydrate metabolism; galactose metabolism. The protein is Galactose-1-phosphate uridylyltransferase of Clostridium perfringens (strain 13 / Type A).